The primary structure comprises 128 residues: Azurin (128 aa).

Residues 1–128 (AECKVTVDST…AMMKGTVTLK (128 aa)) enclose the Plastocyanin-like domain. Residues C3 and C26 are joined by a disulfide bond. Residues H46, C112, H117, and M121 each contribute to the Cu cation site.

Its subcellular location is the periplasm. Its function is as follows. Transfers electrons from cytochrome c551 to cytochrome oxidase. The polypeptide is Azurin (Pseudomonas fluorescens biotype C).